A 936-amino-acid polypeptide reads, in one-letter code: DNA topoisomerase 1 (936 aa).

The Toprim domain maps to 15–139 (RRLVIVESPT…VKRMVFHEIT (125 aa)). The Mg(2+) site is built by E21 and D108. A Topo IA-type catalytic domain is found at 154 to 611 (DIALVDAQET…FYFGGEHGVE (458 aa)). The tract at residues 188–193 (SAGRVQ) is interaction with DNA. Residue Y339 is the O-(5'-phospho-DNA)-tyrosine intermediate of the active site. 4 disordered regions span residues 661-688 (LERM…LTPD), 732-767 (VLPE…SLFR), 841-884 (KRRG…ETNA), and 903-936 (LLAD…AKKA). Over residues 910-936 (RGPVKKKAPAKKAAKKAPAKKAAAKKA) the composition is skewed to basic residues.

It belongs to the type IA topoisomerase family. Monomer. The cofactor is Mg(2+).

The enzyme catalyses ATP-independent breakage of single-stranded DNA, followed by passage and rejoining.. Functionally, releases the supercoiling and torsional tension of DNA, which is introduced during the DNA replication and transcription, by transiently cleaving and rejoining one strand of the DNA duplex. Introduces a single-strand break via transesterification at a target site in duplex DNA. The scissile phosphodiester is attacked by the catalytic tyrosine of the enzyme, resulting in the formation of a DNA-(5'-phosphotyrosyl)-enzyme intermediate and the expulsion of a 3'-OH DNA strand. The free DNA strand then undergoes passage around the unbroken strand, thus removing DNA supercoils. Finally, in the religation step, the DNA 3'-OH attacks the covalent intermediate to expel the active-site tyrosine and restore the DNA phosphodiester backbone. Relaxes negatively (but not positively) supercoiled DNA, concatanates and knots circular ssDNA at 52 but not 37 degrees Celsius. Preferentially nicks supercoiled DNA at C(G/T)CTT, cutting between the TT residues, binds ss and dsDNA with the recognition site. In Mycolicibacterium smegmatis (strain ATCC 700084 / mc(2)155) (Mycobacterium smegmatis), this protein is DNA topoisomerase 1.